Here is a 627-residue protein sequence, read N- to C-terminus: Serine/threonine-protein phosphatase 2A 56 kDa regulatory subunit delta 2 isoform (627 aa).

Residues 1–37 (MKGLRSKFVKALSLKDEQGSHKNGHSKSHYISKNGSY) are disordered.

It belongs to the phosphatase 2A regulatory subunit B family. In terms of assembly, PP2A consists of a common heterodimeric core enzyme, composed of a 36 kDa catalytic subunit (subunit C) and a 65 kDa constant regulatory subunit (PR65 or subunit A), that associates with a variety of regulatory subunits. Proteins that associate with the core dimer include three families of regulatory subunits B (the R2/B/PR55/B55, R3/B''/PR72/PR130/PR59 and R5/B'/B56 families), the 48 kDa variable regulatory subunit, viral proteins, and cell signaling molecules.

It localises to the cytoplasm. The protein resides in the cell tip. Its function is as follows. The B regulatory subunit might modulate substrate selectivity and catalytic activity, and might also direct the localization of the catalytic enzyme to a particular subcellular compartment. Has a role in cell shape control and septum formation. In Schizosaccharomyces pombe (strain 972 / ATCC 24843) (Fission yeast), this protein is Serine/threonine-protein phosphatase 2A 56 kDa regulatory subunit delta 2 isoform (par2).